A 135-amino-acid chain; its full sequence is Ribosome-binding factor A (135 aa).

Belongs to the RbfA family. Monomer. Binds 30S ribosomal subunits, but not 50S ribosomal subunits or 70S ribosomes.

Its subcellular location is the cytoplasm. One of several proteins that assist in the late maturation steps of the functional core of the 30S ribosomal subunit. Associates with free 30S ribosomal subunits (but not with 30S subunits that are part of 70S ribosomes or polysomes). Required for efficient processing of 16S rRNA. May interact with the 5'-terminal helix region of 16S rRNA. The polypeptide is Ribosome-binding factor A (Sinorhizobium fredii (strain NBRC 101917 / NGR234)).